A 575-amino-acid polypeptide reads, in one-letter code: Transcription factor coe2 (575 aa).

The tract at residues arginine 63–asparagine 66 is interaction with DNA. The C5-type zinc-finger motif lies at cysteine 151–cysteine 170. Interaction with DNA regions lie at residues asparagine 197–asparagine 204 and asparagine 236–lysine 239. One can recognise an IPT/TIG domain in the interval proline 254–tyrosine 336. Positions isoleucine 450–methionine 487 are disordered. The segment covering serine 454–serine 476 has biased composition (low complexity). The segment covering asparagine 477–methionine 487 has biased composition (polar residues).

It belongs to the COE family.

The protein resides in the nucleus. May play a pivotal role in the transcriptional cascade that specifies primary neurons in embryos. Stabilizes the higher neural potential of selected progenitor cells that express neurog2/X-ngnr-1 by maintaining Delta-Notch signaling. Thus ensures the transition between neural competence and irreversible commitment to a neural fate. Also promotes neuronal differentiation by activating neurod1 expression, directly or indirectly. This chain is Transcription factor coe2, found in Xenopus tropicalis (Western clawed frog).